A 316-amino-acid polypeptide reads, in one-letter code: Transaldolase (316 aa).

Residue K131 is the Schiff-base intermediate with substrate of the active site.

The protein belongs to the transaldolase family. Type 1 subfamily. As to quaternary structure, homodimer.

It localises to the cytoplasm. The catalysed reaction is D-sedoheptulose 7-phosphate + D-glyceraldehyde 3-phosphate = D-erythrose 4-phosphate + beta-D-fructose 6-phosphate. It functions in the pathway carbohydrate degradation; pentose phosphate pathway; D-glyceraldehyde 3-phosphate and beta-D-fructose 6-phosphate from D-ribose 5-phosphate and D-xylulose 5-phosphate (non-oxidative stage): step 2/3. Functionally, transaldolase is important for the balance of metabolites in the pentose-phosphate pathway. The protein is Transaldolase of Sodalis glossinidius (strain morsitans).